A 387-amino-acid chain; its full sequence is Phosphoglycerate kinase (387 aa).

Substrate-binding positions include 21 to 23, Arg-36, 59 to 62, Arg-113, and Arg-146; these read DLN and HLGR. Residues Lys-197, Glu-314, and 340 to 343 contribute to the ATP site; that span reads GGDT.

This sequence belongs to the phosphoglycerate kinase family. In terms of assembly, monomer.

It localises to the cytoplasm. It catalyses the reaction (2R)-3-phosphoglycerate + ATP = (2R)-3-phospho-glyceroyl phosphate + ADP. It participates in carbohydrate degradation; glycolysis; pyruvate from D-glyceraldehyde 3-phosphate: step 2/5. The sequence is that of Phosphoglycerate kinase from Aliivibrio fischeri (strain MJ11) (Vibrio fischeri).